A 175-amino-acid chain; its full sequence is Protein OPG036 (175 aa).

This sequence belongs to the poxviridae OPG036 family.

It localises to the host nucleus. Plays a role in the inhibition of host innate immune response. Within the host nucleus, inhibits activation of interferon-beta promoter by inhibiting IRF3 activation. The polypeptide is Protein OPG036 (OPG036) (Bos taurus (Bovine)).